A 637-amino-acid polypeptide reads, in one-letter code: MKTKEEFHRIEISKFTEDLREAFGYKIQYRQDLVLVNIRGCNGAGKSTVPMQMLQTDPGAFMLTLDGKDKATVFPSYGFVAMGRYFSKTGGLDGFKNNEETLKVLKLLWELPFSIIMEGVISSTIFSTYCDLFKELEQRNNPKRAVGVLNLLPPFEVCLERIKKRTPEKFDSIKKDQIEGKWRTVNRNAQKFRDAGVTSWDEDNSVIDINDTVSWFFSSIKNNLQPEFTGLRLGVRFPTEEPVKALKKAEKGVKRGKKGRKTSPVAKTLDDNGDGAFLRSLKREIRPHWDPKYLNTPDDNVRLRRDPETGQTLWDMYFINLVERQNIWYRRVIQGKSKPWTDDPVMSTYHFTNVDRRLDRVTLHYIDKVLCNLEDSYESKKFLLLNTFIYRLFVRPETTDAMGYIFPETFEEDWERAKAALRARRESGEPVFTDAYFVNDLKSANPDRANSSNKTENAIHLIQFIIDHLDELAEFTFNPKNSMEEVIEKFTMIPAVGNFNAYEVALDLGIVKEMTGIDFVDWTPDHYANVGPGCKKGIEYVFEDLGNMSHLDIVFFITSVYKGELERLGLEYKYQEGCKELDLRALEGWCCEMSKYFNYYATERGYDWAKGKRPKKKMNLRTDDVSYLNPRISNLVK.

The interval 249-269 is disordered; that stretch reads AEKGVKRGKKGRKTSPVAKTL.

The protein belongs to the thymidylate kinase family. 5-hmdU DNA kinase subfamily.

The enzyme catalyses 5-hydroxymethyl-dUMP in DNA + ATP = 5-phosphomethyl-dUMP in DNA + ADP + H(+). Its function is as follows. Phosphorylates 5-hydroxymethyluracil (5hmdU) into 5-phosphomethyl-2'-deoxyuridine (5- PmdU) on DNA as a step in the pathway leading to thymidine hypermodifications in the viral genome. The phosphate is added internally to the DNA polymer. As a final result of the pathway of hypermodification, alpha-glutamylthymidine (YdTMP) substitutes for about 20% of the thymidines in the viral DNA, the 80% left are dTMP. These modifications probably prevent degradation of viral genome by the host restriction-modification antiviral defense system. The chain is 5-hmdU DNA kinase from Bacillus phage SP10 (Bacillus phage SP-10).